The sequence spans 459 residues: Protoheme IX farnesyltransferase (459 aa).

The unknown stretch occupies residues 1-184 (MSRNTATQFV…AYVQLMKPRL (184 aa)). 12 helical membrane-spanning segments follow: residues 9-29 (FVAVLAAAAMGVYSLLVLGAT), 66-86 (AAALTGLAVVGAAVLAWRTGA), 93-113 (AVTLALALYPVQVVIGAYTAM), 123-143 (VHLTLGVGIFASLVVALAWTL), 184-204 (LMWLLCLVAGAGMALASSQLG), 211-231 (AATVVLTLGGGVLSIGASGTF), 262-282 (LAFGVVLGVASLAAFAAVNLL), 284-304 (AVLGLTAIAFYSIVYTLVLKP), 325-345 (WVAVTGAVGVGGVVLAGVIFL), 382-402 (HIVYYIGATLASAVVLAELTG), 403-423 (LGPLYAATTVLLGAVFLYFAI), and 438-458 (FHASNAYLGCLLVAVVLDTMV). The protoheme IX prenyltransferase stretch occupies residues 185 to 459 (MWLLCLVAGA…VAVVLDTMVV (275 aa)).

This sequence in the C-terminal section; belongs to the UbiA prenyltransferase family. Protoheme IX farnesyltransferase subfamily.

The protein localises to the cell membrane. The catalysed reaction is heme b + (2E,6E)-farnesyl diphosphate + H2O = Fe(II)-heme o + diphosphate. It functions in the pathway porphyrin-containing compound metabolism; heme O biosynthesis; heme O from protoheme: step 1/1. In terms of biological role, converts heme B (protoheme IX) to heme O by substitution of the vinyl group on carbon 2 of heme B porphyrin ring with a hydroxyethyl farnesyl side group. In Halobacterium salinarum (strain ATCC 29341 / DSM 671 / R1), this protein is Protoheme IX farnesyltransferase (ctaB).